The sequence spans 240 residues: tRNA (guanine-N(1)-)-methyltransferase (240 aa).

Residues G110 and 130 to 135 (IGDYVL) each bind S-adenosyl-L-methionine.

This sequence belongs to the RNA methyltransferase TrmD family. In terms of assembly, homodimer.

The protein localises to the cytoplasm. It catalyses the reaction guanosine(37) in tRNA + S-adenosyl-L-methionine = N(1)-methylguanosine(37) in tRNA + S-adenosyl-L-homocysteine + H(+). In terms of biological role, specifically methylates guanosine-37 in various tRNAs. The chain is tRNA (guanine-N(1)-)-methyltransferase from Macrococcus caseolyticus (strain JCSC5402) (Macrococcoides caseolyticum).